The following is a 484-amino-acid chain: Maintenance of mitochondrial morphology protein 1 (484 aa).

The Lumenal portion of the chain corresponds to Met1–Gly22. Residues Phe23 to Phe43 form a helical membrane-spanning segment. Residues Gly44–Arg484 lie on the Cytoplasmic side of the membrane. Disordered stretches follow at residues Pro50–Thr98, Ser272–Pro319, and Arg388–Arg484. The span at Leu54–Ser64 shows a compositional bias: basic residues. 2 stretches are compositionally biased toward polar residues: residues Asn65 to Arg78 and Ser85 to Thr98. In terms of domain architecture, SMP-LTD spans Gln130 to Pro380. The segment covering Ser272–Pro286 has biased composition (pro residues). The segment covering Thr399–Ala408 has biased composition (polar residues). Residues Leu413 to Arg427 are compositionally biased toward basic and acidic residues. 2 stretches are compositionally biased toward polar residues: residues Gln437 to Val449 and Gly466 to Gly476.

It belongs to the MMM1 family. As to quaternary structure, homodimer. Component of the ER-mitochondria encounter structure (ERMES) or MDM complex, composed of mmm1, mdm10, mdm12 and mdm34. A mmm1 homodimer associates with one molecule of mdm12 on each side in a pairwise head-to-tail manner, and the SMP-LTD domains of mmm1 and mdm12 generate a continuous hydrophobic tunnel for phospholipid trafficking.

The protein localises to the endoplasmic reticulum membrane. Functionally, component of the ERMES/MDM complex, which serves as a molecular tether to connect the endoplasmic reticulum (ER) and mitochondria. Components of this complex are involved in the control of mitochondrial shape and protein biogenesis, and function in nonvesicular lipid trafficking between the ER and mitochondria. The mdm12-mmm1 subcomplex functions in the major beta-barrel assembly pathway that is responsible for biogenesis of all outer membrane beta-barrel proteins, and acts in a late step after the SAM complex. The mdm10-mdm12-mmm1 subcomplex further acts in the TOM40-specific pathway after the action of the mdm12-mmm1 complex. Essential for establishing and maintaining the structure of mitochondria and maintenance of mtDNA nucleoids. This Aspergillus niger (strain ATCC MYA-4892 / CBS 513.88 / FGSC A1513) protein is Maintenance of mitochondrial morphology protein 1.